A 379-amino-acid polypeptide reads, in one-letter code: Cytochrome b (379 aa).

4 consecutive transmembrane segments (helical) span residues 33–53 (FGSL…FLAM), 77–98 (WTIR…FIHV), 113–133 (WNIG…GYVL), and 178–198 (FFAL…IHLL). Heme b contacts are provided by H83 and H97. Residues H182 and H196 each contribute to the heme b site. A ubiquinone is bound at residue H201. 4 helical membrane passes run 226-246 (TKDF…TLFY), 288-308 (PGGV…PFLQ), 320-340 (LSQF…WIGG), and 347-367 (FISI…FIMP).

It belongs to the cytochrome b family. The cytochrome bc1 complex contains 11 subunits: 3 respiratory subunits (MT-CYB, CYC1 and UQCRFS1), 2 core proteins (UQCRC1 and UQCRC2) and 6 low-molecular weight proteins (UQCRH/QCR6, UQCRB/QCR7, UQCRQ/QCR8, UQCR10/QCR9, UQCR11/QCR10 and a cleavage product of UQCRFS1). This cytochrome bc1 complex then forms a dimer. Heme b serves as cofactor.

The protein localises to the mitochondrion inner membrane. Its function is as follows. Component of the ubiquinol-cytochrome c reductase complex (complex III or cytochrome b-c1 complex) that is part of the mitochondrial respiratory chain. The b-c1 complex mediates electron transfer from ubiquinol to cytochrome c. Contributes to the generation of a proton gradient across the mitochondrial membrane that is then used for ATP synthesis. The protein is Cytochrome b (MT-CYB) of Lepilemur ruficaudatus (Red-tailed sportive lemur).